The sequence spans 306 residues: Protoheme IX farnesyltransferase (306 aa).

Transmembrane regions (helical) follow at residues 32 to 52 (VVQLIVFCAFIGMVLAVPGMP), 57 to 77 (WALMAVASAGIWLVAGAAAAF), 108 to 128 (LLFSALLCAAGSALLYWWVNP), 129 to 149 (LTMWLTFATFVGYAVIYTVIL), 157 to 177 (IVIGGASGAMPPVLGWAAMTG), 183 to 203 (ALILFLIIFLWTPPHFWALAL), 230 to 250 (VFLYTLILFAGCLMPFVYGMS), 252 to 272 (WIYLAAAVVLSAGFCLYGFRL), and 285 to 305 (FRFSLIHLSLLFAALLVDHYL).

This sequence belongs to the UbiA prenyltransferase family. Protoheme IX farnesyltransferase subfamily.

It localises to the cell inner membrane. It carries out the reaction heme b + (2E,6E)-farnesyl diphosphate + H2O = Fe(II)-heme o + diphosphate. It participates in porphyrin-containing compound metabolism; heme O biosynthesis; heme O from protoheme: step 1/1. In terms of biological role, converts heme B (protoheme IX) to heme O by substitution of the vinyl group on carbon 2 of heme B porphyrin ring with a hydroxyethyl farnesyl side group. The sequence is that of Protoheme IX farnesyltransferase from Acidovorax ebreus (strain TPSY) (Diaphorobacter sp. (strain TPSY)).